We begin with the raw amino-acid sequence, 508 residues long: ATP synthase subunit alpha (508 aa).

169 to 176 (GDRGTGKS) provides a ligand contact to ATP.

This sequence belongs to the ATPase alpha/beta chains family. As to quaternary structure, F-type ATPases have 2 components, CF(1) - the catalytic core - and CF(0) - the membrane proton channel. CF(1) has five subunits: alpha(3), beta(3), gamma(1), delta(1), epsilon(1). CF(0) has three main subunits: a(1), b(2) and c(9-12). The alpha and beta chains form an alternating ring which encloses part of the gamma chain. CF(1) is attached to CF(0) by a central stalk formed by the gamma and epsilon chains, while a peripheral stalk is formed by the delta and b chains.

The protein localises to the cell membrane. The catalysed reaction is ATP + H2O + 4 H(+)(in) = ADP + phosphate + 5 H(+)(out). Produces ATP from ADP in the presence of a proton gradient across the membrane. The alpha chain is a regulatory subunit. The polypeptide is ATP synthase subunit alpha (Natranaerobius thermophilus (strain ATCC BAA-1301 / DSM 18059 / JW/NM-WN-LF)).